A 319-amino-acid polypeptide reads, in one-letter code: MSPPTVKLNSGYDMPLVGFGLWKVNNDTCADQVYEAIKAGYRLFDGACDYGNEVEAGQGVARAIKEGIVKRSDLFIVSKLWNSFHDGERVEPIARKQLSDWGIDYFDLYIVHFPVSLKYVDPEVRYPPGWENAEGKVELGKATIQETWTAMESLVDKGLARSIGISNFSAQLLLDLLRYARIRPATLQIEHHPYLTQERLVTFAQREGIAVTAYSSFGPLSFLELSVKQAEGAPPLFEHPVIKDIAEKHGKTPAQVLLRWATQRGIAVIPKSNNPARLLQNLDVVGFDLEDGELKAISDLDKGLRFNDPPNYGLPITIF.

Tyrosine 50 (proton donor) is an active-site residue. Histidine 112 is a substrate binding site. NAD(+)-binding positions include 166–167 (SN), 215–224 (SSFGPLSFLE), and 271–281 (KSNNPARLLQN).

Belongs to the aldo/keto reductase family.

The catalysed reaction is xylitol + NAD(+) = D-xylose + NADH + H(+). It carries out the reaction xylitol + NADP(+) = D-xylose + NADPH + H(+). It participates in carbohydrate metabolism; D-xylose degradation. Catalyzes the initial reaction in the xylose utilization pathway by reducing D-xylose into xylitol. Xylose is a major component of hemicelluloses such as xylan. Most fungi utilize D-xylose via three enzymatic reactions, xylose reductase (XR), xylitol dehydrogenase (XDH), and xylulokinase, to form xylulose 5-phosphate, which enters pentose phosphate pathway. In Emericella nidulans (strain FGSC A4 / ATCC 38163 / CBS 112.46 / NRRL 194 / M139) (Aspergillus nidulans), this protein is Probable NAD(P)H-dependent D-xylose reductase xyl1 (xyl1).